A 347-amino-acid chain; its full sequence is Photosystem II protein D1 (347 aa).

Transmembrane regions (helical) follow at residues 32–49 (YIGW…LATV), 121–136 (HFIL…EWEF), and 145–159 (WIFV…AASA). Residue His121 participates in chlorophyll a binding. Position 129 (Tyr129) interacts with pheophytin a. Residues Asp173 and Glu192 each coordinate [CaMn4O5] cluster. Residues 200 to 221 (FHILGVAAVFGGSLFSAMHGSL) form a helical membrane-spanning segment. Chlorophyll a is bound at residue His201. A quinone is bound by residues His218 and 267–268 (SF). His218 lines the Fe cation pocket. Residue His275 participates in Fe cation binding. The chain crosses the membrane as a helical span at residues 277–291 (FLAAWPVIGIWFTAL). The [CaMn4O5] cluster site is built by His335, Glu336, Asp345, and Ala347.

This sequence belongs to the reaction center PufL/M/PsbA/D family. As to quaternary structure, PSII is composed of 1 copy each of membrane proteins PsbA, PsbB, PsbC, PsbD, PsbE, PsbF, PsbH, PsbI, PsbJ, PsbK, PsbL, PsbM, PsbT, PsbX, PsbY, PsbZ, Psb30/Ycf12, at least 3 peripheral proteins of the oxygen-evolving complex and a large number of cofactors. It forms dimeric complexes. The D1/D2 heterodimer binds P680, chlorophylls that are the primary electron donor of PSII, and subsequent electron acceptors. It shares a non-heme iron and each subunit binds pheophytin, quinone, additional chlorophylls, carotenoids and lipids. D1 provides most of the ligands for the Mn4-Ca-O5 cluster of the oxygen-evolving complex (OEC). There is also a Cl(-1) ion associated with D1 and D2, which is required for oxygen evolution. The PSII complex binds additional chlorophylls, carotenoids and specific lipids. is required as a cofactor. Post-translationally, tyr-164 forms a radical intermediate that is referred to as redox-active TyrZ, YZ or Y-Z.

It is found in the plastid. Its subcellular location is the chloroplast thylakoid membrane. It carries out the reaction 2 a plastoquinone + 4 hnu + 2 H2O = 2 a plastoquinol + O2. Its function is as follows. Photosystem II (PSII) is a light-driven water:plastoquinone oxidoreductase that uses light energy to abstract electrons from H(2)O, generating O(2) and a proton gradient subsequently used for ATP formation. It consists of a core antenna complex that captures photons, and an electron transfer chain that converts photonic excitation into a charge separation. The D1/D2 (PsbA/PsbD) reaction center heterodimer binds P680, the primary electron donor of PSII as well as several subsequent electron acceptors. This chain is Photosystem II protein D1, found in Heterocapsa niei (Dinoflagellate).